Consider the following 2236-residue polypeptide: uncharacterized protein (2236 aa).

2 Spectrin repeats span residues 46 to 146 and 238 to 335; these read QVYL…RQLE and QKFV…TDIE. Coiled coils occupy residues 496–541 and 603–631; these read VVEQ…TVNS and DDQQKNMANEELRKTYENLKKIEMEVGRQ. Spectrin repeat units follow at residues 839-949, 1048-1146, 1261-1361, 1367-1459, and 1562-1667; these read YEYD…KTLK, KKLE…KRME, LGAE…VDLN, ILID…KSLA, and QKVV…NRLE. Positions 1835–1869 form a coiled coil; it reads QNSTDAEKKLSLVSERLNALKKQLDLLAEKIAVDD. EF-hand domains follow at residues 2104 to 2139 and 2141 to 2176; these read KQLHEFELAFDYFDRERNGWLDYKHFELCLKSQGYN and SAENTLKETMTLLDPSTTGHIQKHDYVRYMVKHETT. 5 residues coordinate Ca(2+): Asp-2154, Ser-2156, Thr-2158, His-2160, and Asp-2165.

The protein belongs to the spectrin family.

This is an uncharacterized protein from Caenorhabditis elegans.